The sequence spans 182 residues: Glycerol-3-phosphate acyltransferase 1 (182 aa).

The next 5 membrane-spanning stretches (helical) occupy residues 5–25 (MQFL…AYIV), 54–74 (GYFV…VSIA), 81–101 (STFL…PILF), 117–137 (IAFD…FYLI), and 157–177 (ILYS…VLIL).

This sequence belongs to the PlsY family. As to quaternary structure, probably interacts with PlsX.

It is found in the cell membrane. The enzyme catalyses an acyl phosphate + sn-glycerol 3-phosphate = a 1-acyl-sn-glycero-3-phosphate + phosphate. It functions in the pathway lipid metabolism; phospholipid metabolism. In terms of biological role, catalyzes the transfer of an acyl group from acyl-phosphate (acyl-PO(4)) to glycerol-3-phosphate (G3P) to form lysophosphatidic acid (LPA). This enzyme utilizes acyl-phosphate as fatty acyl donor, but not acyl-CoA or acyl-ACP. This is Glycerol-3-phosphate acyltransferase 1 from Bacillus thuringiensis subsp. konkukian (strain 97-27).